Consider the following 170-residue polypeptide: Brassinosteroid-responsive RING protein 1 (170 aa).

A helical membrane pass occupies residues 15 to 37 (LFVQTLSILGFIRTIVFSIFRFL). The RING-type; atypical zinc finger occupies 94–137 (CAVCLYEFEGEQEIRWLRNCRHIFHRSCLDRWMDHDQKTCPLCR).

The protein belongs to the RING-type zinc finger family. In terms of tissue distribution, highly expressed in stems, rosette leaves and siliques, and moderately expressed in roots, cauline leaves and flower. Detected at low levels in seeds.

It is found in the membrane. May be involved in the brassinosteroids (BRs) signaling pathway and regulate the growth and development of rosette leaves. Seems to prevent over development of leaves and inflorescence stems. This is Brassinosteroid-responsive RING protein 1 from Arabidopsis thaliana (Mouse-ear cress).